Reading from the N-terminus, the 259-residue chain is ATP synthase subunit b 2 (259 aa).

A helical membrane pass occupies residues tryptophan 5 to tyrosine 27.

Belongs to the ATPase B chain family. In terms of assembly, F-type ATPases have 2 components, F(1) - the catalytic core - and F(0) - the membrane proton channel. F(1) has five subunits: alpha(3), beta(3), gamma(1), delta(1), epsilon(1). F(0) has three main subunits: a(1), b(2) and c(10-14). The alpha and beta chains form an alternating ring which encloses part of the gamma chain. F(1) is attached to F(0) by a central stalk formed by the gamma and epsilon chains, while a peripheral stalk is formed by the delta and b chains.

It is found in the cell inner membrane. F(1)F(0) ATP synthase produces ATP from ADP in the presence of a proton or sodium gradient. F-type ATPases consist of two structural domains, F(1) containing the extramembraneous catalytic core and F(0) containing the membrane proton channel, linked together by a central stalk and a peripheral stalk. During catalysis, ATP synthesis in the catalytic domain of F(1) is coupled via a rotary mechanism of the central stalk subunits to proton translocation. Functionally, component of the F(0) channel, it forms part of the peripheral stalk, linking F(1) to F(0). This is ATP synthase subunit b 2 from Syntrophotalea carbinolica (strain DSM 2380 / NBRC 103641 / GraBd1) (Pelobacter carbinolicus).